The primary structure comprises 339 residues: MLDPRAQTLLKTLIERYIAEGQPVGSRTLSRYSGLELSPATIRNVMSDLEELGLVISPHTSAGRIPTPRGYRLFVDTMLTVEPSADEDAVMRAVKTTLQPGEPQKVVAAAASVLSNLSQFAGVILTPRRSHVFKQIEFLRLSDKRILLIIVTPEGDVQNRIMATQRDFTPSQLVEASNYINAHFAGLSFDEVRRRLREEIDELRGDMTTLMHAAVTASTDVTDTGETVLISGERKLLEVADLSSDMARLRKLFDVFDQKTSLLQLLDVSSHAQGVQIFIGGESNLVPIEEMSVVTAPYEVNGKIVGTLGVIGPTRMAYNRVIPIVDITARLLSMTLSQQ.

Belongs to the HrcA family.

Functionally, negative regulator of class I heat shock genes (grpE-dnaK-dnaJ and groELS operons). Prevents heat-shock induction of these operons. In Paraburkholderia phymatum (strain DSM 17167 / CIP 108236 / LMG 21445 / STM815) (Burkholderia phymatum), this protein is Heat-inducible transcription repressor HrcA.